We begin with the raw amino-acid sequence, 234 residues long: Orotidine 5'-phosphate decarboxylase (234 aa).

Substrate is bound by residues Asp11, Lys33, Asp60–Thr69, Thr120, Arg181, Gln190, Gly210, and Arg211. The active-site Proton donor is Lys62.

Belongs to the OMP decarboxylase family. Type 1 subfamily. Homodimer.

It catalyses the reaction orotidine 5'-phosphate + H(+) = UMP + CO2. It functions in the pathway pyrimidine metabolism; UMP biosynthesis via de novo pathway; UMP from orotate: step 2/2. In terms of biological role, catalyzes the decarboxylation of orotidine 5'-monophosphate (OMP) to uridine 5'-monophosphate (UMP). The sequence is that of Orotidine 5'-phosphate decarboxylase from Shewanella sediminis (strain HAW-EB3).